The following is a 117-amino-acid chain: Alpha-endosulfine (117 aa).

Residues 1–53 (MAAPLGTGARAEDSGQEKQDSQEKETVIPERAEEAKLKAKYPNLGQKPGGSDF) are disordered. The span at 10 to 37 (RAEDSGQEKQDSQEKETVIPERAEEAKL) shows a compositional bias: basic and acidic residues. Ser67 is subject to Phosphoserine; by GWL. A disordered region spans residues 76 to 117 (KMKNKQLPTAGPDKNLVTGDHIPKPQDLPQRKSSLVASKLAG).

The protein belongs to the endosulfine family. Phosphorylation at Ser-67 by GWL during mitosis is essential for interaction with PPP2R2D (PR55-delta) and subsequent inactivation of PP2A.

The protein localises to the cytoplasm. In terms of biological role, protein phosphatase inhibitor that specifically inhibits protein phosphatase 2A (PP2A) during mitosis. When phosphorylated at Ser-67 during mitosis, specifically interacts with PPP2R2D (PR55-delta) and inhibits its activity, leading to inactivation of PP2A, an essential condition to keep cyclin-B1-CDK1 activity high during M phase. The protein is Alpha-endosulfine (ENSA) of Gallus gallus (Chicken).